The sequence spans 363 residues: Ly6/PLAUR domain-containing protein 3 (363 aa).

A signal peptide spans 1 to 32 (MDAARRGDTQPVMWTTGWLLLLPLLLCEGAQA). In terms of domain architecture, UPAR/Ly6 1 spans 35-128 (CYSCVQKADD…LNLTLRGLNP (94 aa)). N-linked (GlcNAc...) asparagine glycans are attached at residues N120, N131, N178, and N185. A UPAR/Ly6 2 domain is found at 142–224 (CYSCVGLSRE…GSCCQGPRCN (83 aa)). Residues 238–248 (PPLVLLPPPTT) show a composition bias toward pro residues. Disordered stretches follow at residues 238–287 (PPLV…TSPH) and 301–336 (LSGGAAGHGGTAGHGGAAGHQDRSNMEKYPGKGGAQ). The segment covering 249–278 (AAPSTRAQNSSSTTSTAAPTTTTSIIKPTT) has biased composition (low complexity). Gly residues predominate over residues 304 to 318 (GAAGHGGTAGHGGAA). Over residues 320–330 (HQDRSNMEKYP) the composition is skewed to basic and acidic residues. S343 carries the GPI-anchor amidated serine lipid modification. Positions 344 to 363 (GTLGSWLSAVLLTVVAGAML) are cleaved as a propeptide — removed in mature form.

In terms of assembly, binds laminin-1 and laminin-5. Interacts with LGALS3. Interacts with AGR2 and AGR3.

It is found in the cell membrane. Functionally, supports cell migration. May be involved in tumor progression. This chain is Ly6/PLAUR domain-containing protein 3 (Lypd3), found in Mus musculus (Mouse).